We begin with the raw amino-acid sequence, 236 residues long: Carbonyl reductase family member 4 (236 aa).

NADP(+) is bound by residues 11–14 (SRGI), 34–35 (RN), Asp55, and 82–84 (SAG). Position 134 (Ser134) interacts with substrate. NADP(+) contacts are provided by residues Tyr147, Lys151, and 180-182 (IRT). The active-site Proton acceptor is the Tyr147.

The protein belongs to the short-chain dehydrogenases/reductases (SDR) family. Homotetramer (in vitro). Heterotetramer with HSD17B8; contains two molecules each of HSD17B8 and CBR4.

The protein resides in the mitochondrion matrix. The protein operates within lipid metabolism; fatty acid biosynthesis. Functionally, the heterotetramer with HSD17B8 has NADH-dependent 3-ketoacyl-acyl carrier protein reductase activity, and thereby plays a role in mitochondrial fatty acid biosynthesis. Within the heterotetramer, HSD17B8 binds NADH; CBR4 binds NADPD. The homotetramer has NADPH-dependent quinone reductase activity. Both homotetramer and the heterotetramer have broad in vitro substrate specificity and can reduce 9,10-phenanthrenequinone, 1,4-benzoquinone and various other o-quinones and p-quinones. The chain is Carbonyl reductase family member 4 (cbr4) from Xenopus laevis (African clawed frog).